The sequence spans 155 residues: Endoribonuclease YbeY (155 aa).

Zn(2+)-binding residues include His116, His120, and His126.

Belongs to the endoribonuclease YbeY family. Zn(2+) serves as cofactor.

It localises to the cytoplasm. In terms of biological role, single strand-specific metallo-endoribonuclease involved in late-stage 70S ribosome quality control and in maturation of the 3' terminus of the 16S rRNA. The chain is Endoribonuclease YbeY from Thermobifida fusca (strain YX).